Here is a 455-residue protein sequence, read N- to C-terminus: Bifunctional protein GlmU (455 aa).

Positions methionine 1–arginine 226 are pyrophosphorylase. UDP-N-acetyl-alpha-D-glucosamine-binding positions include leucine 8–glycine 11, lysine 22, glutamine 73, glycine 78–threonine 79, tyrosine 99–aspartate 101, glycine 136, glutamate 151, asparagine 166, and asparagine 224. Mg(2+) is bound at residue aspartate 101. Asparagine 224 contacts Mg(2+). A linker region spans residues arginine 227 to glutamine 247. Residues glycine 248–serine 455 are N-acetyltransferase. Residues arginine 330 and lysine 348 each coordinate UDP-N-acetyl-alpha-D-glucosamine. The active-site Proton acceptor is histidine 360. UDP-N-acetyl-alpha-D-glucosamine-binding residues include tyrosine 363 and asparagine 374. Residues alanine 377, asparagine 383 to tyrosine 384, serine 402, alanine 420, and arginine 437 each bind acetyl-CoA.

In the N-terminal section; belongs to the N-acetylglucosamine-1-phosphate uridyltransferase family. This sequence in the C-terminal section; belongs to the transferase hexapeptide repeat family. As to quaternary structure, homotrimer. Requires Mg(2+) as cofactor.

Its subcellular location is the cytoplasm. The catalysed reaction is alpha-D-glucosamine 1-phosphate + acetyl-CoA = N-acetyl-alpha-D-glucosamine 1-phosphate + CoA + H(+). It catalyses the reaction N-acetyl-alpha-D-glucosamine 1-phosphate + UTP + H(+) = UDP-N-acetyl-alpha-D-glucosamine + diphosphate. It participates in nucleotide-sugar biosynthesis; UDP-N-acetyl-alpha-D-glucosamine biosynthesis; N-acetyl-alpha-D-glucosamine 1-phosphate from alpha-D-glucosamine 6-phosphate (route II): step 2/2. It functions in the pathway nucleotide-sugar biosynthesis; UDP-N-acetyl-alpha-D-glucosamine biosynthesis; UDP-N-acetyl-alpha-D-glucosamine from N-acetyl-alpha-D-glucosamine 1-phosphate: step 1/1. The protein operates within bacterial outer membrane biogenesis; LPS lipid A biosynthesis. Catalyzes the last two sequential reactions in the de novo biosynthetic pathway for UDP-N-acetylglucosamine (UDP-GlcNAc). The C-terminal domain catalyzes the transfer of acetyl group from acetyl coenzyme A to glucosamine-1-phosphate (GlcN-1-P) to produce N-acetylglucosamine-1-phosphate (GlcNAc-1-P), which is converted into UDP-GlcNAc by the transfer of uridine 5-monophosphate (from uridine 5-triphosphate), a reaction catalyzed by the N-terminal domain. This Pseudomonas putida (strain GB-1) protein is Bifunctional protein GlmU.